The primary structure comprises 425 residues: Histone-binding protein RBBP4-B (425 aa).

A2 carries the post-translational modification N-acetylalanine. 7 WD repeats span residues 32–125 (YDLV…NHEG), 126–175 (EVNR…RLRG), 176–223 (HQKE…KTIF), 225–270 (GHTA…HSVD), 271–314 (AHTA…HSFE), 315–371 (SHKD…FIHG), and 372–404 (GHTA…VWQM).

This sequence belongs to the WD repeat RBAP46/RBAP48/MSI1 family. As to quaternary structure, binds directly to histone H4, probably via helix 1 of the histone fold, a region that is not accessible when histone H4 is in chromatin. Probably forms a large corepressor complex that contains ncor1, sin3a, hdac1-A and/or hdac1-B, hdac2, rbbp4-A and/or rbbp4-B and possibly rbbp7.

It localises to the nucleus. The protein resides in the chromosome. Its subcellular location is the telomere. Functionally, core histone-binding subunit that may target chromatin assembly factors, chromatin remodeling factors and histone deacetylases to their histone substrates in a manner that is regulated by nucleosomal DNA. Component of several complexes which regulate chromatin metabolism. The polypeptide is Histone-binding protein RBBP4-B (rbbp4-b) (Xenopus laevis (African clawed frog)).